Here is a 188-residue protein sequence, read N- to C-terminus: Elongation factor P (188 aa).

N6-(3,6-diaminohexanoyl)-5-hydroxylysine is present on K34.

This sequence belongs to the elongation factor P family. In terms of processing, may be beta-lysylated on the epsilon-amino group of Lys-34 by the combined action of EpmA and EpmB, and then hydroxylated on the C5 position of the same residue by EpmC (if this protein is present). Lysylation is critical for the stimulatory effect of EF-P on peptide-bond formation. The lysylation moiety may extend toward the peptidyltransferase center and stabilize the terminal 3-CCA end of the tRNA. Hydroxylation of the C5 position on Lys-34 may allow additional potential stabilizing hydrogen-bond interactions with the P-tRNA.

It is found in the cytoplasm. Its pathway is protein biosynthesis; polypeptide chain elongation. Functionally, involved in peptide bond synthesis. Alleviates ribosome stalling that occurs when 3 or more consecutive Pro residues or the sequence PPG is present in a protein, possibly by augmenting the peptidyl transferase activity of the ribosome. Modification of Lys-34 is required for alleviation. This is Elongation factor P from Hamiltonella defensa subsp. Acyrthosiphon pisum (strain 5AT).